The chain runs to 526 residues: Peptide chain release factor 3 (526 aa).

Residues 9–277 enclose the tr-type G domain; that stretch reads DKRRTFAIIS…GIVEWAPKPL (269 aa). GTP contacts are provided by residues 18 to 25, 86 to 90, and 140 to 143; these read SHPDAGKT, DTPGH, and NKLD.

Belongs to the TRAFAC class translation factor GTPase superfamily. Classic translation factor GTPase family. PrfC subfamily.

The protein resides in the cytoplasm. Functionally, increases the formation of ribosomal termination complexes and stimulates activities of RF-1 and RF-2. It binds guanine nucleotides and has strong preference for UGA stop codons. It may interact directly with the ribosome. The stimulation of RF-1 and RF-2 is significantly reduced by GTP and GDP, but not by GMP. The polypeptide is Peptide chain release factor 3 (Shewanella baltica (strain OS155 / ATCC BAA-1091)).